Here is a 300-residue protein sequence, read N- to C-terminus: NAD kinase (300 aa).

Asp75 (proton acceptor) is an active-site residue. Residues 75-76 (DG), 149-150 (ND), Arg177, Asp179, 190-195 (TAYALS), Ala214, and Gln248 each bind NAD(+).

Belongs to the NAD kinase family. Requires a divalent metal cation as cofactor.

It localises to the cytoplasm. The catalysed reaction is NAD(+) + ATP = ADP + NADP(+) + H(+). In terms of biological role, involved in the regulation of the intracellular balance of NAD and NADP, and is a key enzyme in the biosynthesis of NADP. Catalyzes specifically the phosphorylation on 2'-hydroxyl of the adenosine moiety of NAD to yield NADP. The protein is NAD kinase of Burkholderia vietnamiensis (strain G4 / LMG 22486) (Burkholderia cepacia (strain R1808)).